The following is a 379-amino-acid chain: UDP-N-acetylglucosamine--N-acetylmuramyl-(pentapeptide) pyrophosphoryl-undecaprenol N-acetylglucosamine transferase (379 aa).

UDP-N-acetyl-alpha-D-glucosamine contacts are provided by residues 17-19, N128, R169, S197, and Q298; that span reads TGG.

Belongs to the glycosyltransferase 28 family. MurG subfamily.

The protein localises to the cell inner membrane. It carries out the reaction di-trans,octa-cis-undecaprenyl diphospho-N-acetyl-alpha-D-muramoyl-L-alanyl-D-glutamyl-meso-2,6-diaminopimeloyl-D-alanyl-D-alanine + UDP-N-acetyl-alpha-D-glucosamine = di-trans,octa-cis-undecaprenyl diphospho-[N-acetyl-alpha-D-glucosaminyl-(1-&gt;4)]-N-acetyl-alpha-D-muramoyl-L-alanyl-D-glutamyl-meso-2,6-diaminopimeloyl-D-alanyl-D-alanine + UDP + H(+). It participates in cell wall biogenesis; peptidoglycan biosynthesis. Its function is as follows. Cell wall formation. Catalyzes the transfer of a GlcNAc subunit on undecaprenyl-pyrophosphoryl-MurNAc-pentapeptide (lipid intermediate I) to form undecaprenyl-pyrophosphoryl-MurNAc-(pentapeptide)GlcNAc (lipid intermediate II). This Brucella suis biovar 1 (strain 1330) protein is UDP-N-acetylglucosamine--N-acetylmuramyl-(pentapeptide) pyrophosphoryl-undecaprenol N-acetylglucosamine transferase.